Consider the following 548-residue polypeptide: Telomerase Cajal body protein 1 (548 aa).

Positions 1-142 (MKTLETQPLA…SGEPAAEDEG (142 aa)) are disordered. A compositionally biased stretch (low complexity) spans 15-31 (PSDQDPAPAHPSPHASP). Phosphoserine is present on residues Ser26, Ser30, and Ser54. Ser64 bears the Phosphoserine; by ATM mark. Residues Ser85, Ser90, Ser112, and Ser114 each carry the phosphoserine modification. WD repeat units follow at residues 167 to 206 (QPEN…YHEG), 222 to 267 (EGDT…LRAS), 272 to 313 (NHLD…RDCE), 323 to 364 (GQSG…ALLG), 365 to 405 (GHQG…YPLW), and 411 to 450 (VTTN…NDGK). Thr489 is modified (phosphothreonine). Ser491 is subject to Phosphoserine. The tract at residues 526 to 548 (SIPDDHQGEKGQGGTEGGVGELI) is disordered. A compositionally biased stretch (gly residues) spans 535–548 (KGQGGTEGGVGELI).

This sequence belongs to the TCAB1 family. As to quaternary structure, component of the telomerase holoenzyme complex composed of one molecule of TERT, one molecule of WRAP53/TCAB1, two molecules of H/ACA ribonucleoprotein complex subunits DKC1, NOP10, NHP2 and GAR1, and a telomerase RNA template component (TERC). The telomerase holoenzyme complex is associated with TEP1, SMG6/EST1A and POT1. Interacts with the chaperonin-containing T-complex (TRiC) complex; which mediates the folding of WRAP53/TCAB1. Interacts with COIL. Interacts with SMN1. Interacts with RNF8. Interacts with histone H2AX. Phosphorylated at Ser-64 by ATM in response to DNA damage, promoting its interaction with histone H2AX and localization to sites of DNA double-strand breaks. In terms of tissue distribution, expressed in all tissues and cell lines examined.

Its subcellular location is the nucleus. It is found in the cajal body. The protein localises to the chromosome. It localises to the telomere. In terms of biological role, RNA chaperone that plays a key role in telomere maintenance and RNA localization to Cajal bodies. Specifically recognizes and binds the Cajal body box (CAB box) present in both small Cajal body RNAs (scaRNAs) and telomerase RNA template component (TERC). Essential component of the telomerase holoenzyme complex, a ribonucleoprotein complex essential for the replication of chromosome termini that elongates telomeres in most eukaryotes. In the telomerase holoenzyme complex, required to stimulate the catalytic activity of the complex. Acts by specifically binding the CAB box of the TERC RNA and controlling the folding of the CR4/CR5 region of the TERC RNA, a critical step for telomerase activity. In addition, also controls telomerase holoenzyme complex localization to Cajal body. During S phase, required for delivery of TERC to telomeres during S phase and for telomerase activity. In addition to its role in telomere maintenance, also required for Cajal body formation, probably by mediating localization of scaRNAs to Cajal bodies. Also plays a role in DNA repair: phosphorylated by ATM in response to DNA damage and relocalizes to sites of DNA double-strand breaks to promote the repair of DNA double-strand breaks. Acts by recruiting the ubiquitin ligase RNF8 to DNA breaks and promote both homologous recombination (HR) and non-homologous end joining (NHEJ). This chain is Telomerase Cajal body protein 1, found in Homo sapiens (Human).